A 346-amino-acid polypeptide reads, in one-letter code: Flap endonuclease 1 (346 aa).

An N-domain region spans residues M1–K100. Mg(2+) is bound by residues D29, D82, E154, E156, D175, D177, and D238. Residues E118 to K260 are I-domain. The interaction with PCNA stretch occupies residues K336–F344.

The protein belongs to the XPG/RAD2 endonuclease family. FEN1 subfamily. As to quaternary structure, interacts with PCNA. PCNA stimulates the nuclease activity without altering cleavage specificity. The cofactor is Mg(2+).

In terms of biological role, structure-specific nuclease with 5'-flap endonuclease and 5'-3' exonuclease activities involved in DNA replication and repair. During DNA replication, cleaves the 5'-overhanging flap structure that is generated by displacement synthesis when DNA polymerase encounters the 5'-end of a downstream Okazaki fragment. Binds the unpaired 3'-DNA end and kinks the DNA to facilitate 5' cleavage specificity. Cleaves one nucleotide into the double-stranded DNA from the junction in flap DNA, leaving a nick for ligation. Also involved in the base excision repair (BER) pathway. Acts as a genome stabilization factor that prevents flaps from equilibrating into structures that lead to duplications and deletions. Also possesses 5'-3' exonuclease activity on nicked or gapped double-stranded DNA. This Thermofilum pendens (strain DSM 2475 / Hrk 5) protein is Flap endonuclease 1.